Here is a 315-residue protein sequence, read N- to C-terminus: Transcriptional regulator protein Pur-beta (315 aa).

The interval 1-39 is disordered; it reads MADGDSGSERGGGGPGSFQPAPRGGGGPGGEQETQELAS. At Ala-2 the chain carries N-acetylalanine. Phosphoserine is present on residues Ser-6 and Ser-8. Arg-23 carries the post-translational modification Omega-N-methylarginine. A DNA-binding region spans residues 28–254; it reads PGGEQETQEL…GVFLRVSEVK (227 aa). A Phosphothreonine modification is found at Thr-34. Ser-104 is modified (phosphoserine). An Omega-N-methylarginine modification is found at Arg-155. The segment at 200 to 220 is disordered; it reads DDELAGGPGGGAGGPGGGLYG. Positions 205-219 are enriched in gly residues; sequence GGPGGGAGGPGGGLY. The residue at position 270 (Lys-270) is an N6-acetyllysine. Over residues 288 to 298 the composition is skewed to basic and acidic residues; sequence RQRDKLYERRG. Positions 288-315 are disordered; that stretch reads RQRDKLYERRGGGSGGGDESEGEEVDED. Arg-297 is subject to Omega-N-methylarginine. 2 positions are modified to phosphoserine: Ser-301 and Ser-307. Acidic residues predominate over residues 305-315; the sequence is DESEGEEVDED.

Belongs to the PUR DNA-binding protein family. Homodimer, heterodimer with PURA and heterotrimer with PURA and YBX1/Y-box protein 1. Interacts with MYOCD and SRF. In terms of tissue distribution, expressed in muscle cells and in the liver.

The protein resides in the nucleus. Its function is as follows. Transcriptional regulator which can act as an activator or a repressor. Represses the transcription of ACTA2 in fibroblasts and smooth muscle cells via its ability to interact with the purine-rich strand of a MCAT- containing element in the 5' flanking region of the gene. Represses the transcription of MYOCD, capable of repressing all isoforms of MYOCD but the magnitude of the repressive effects is most notable for the SMC- specific isoforms. Promotes hepatic glucose production by activating the transcription of ADCY6, leading to cAMP accumulation, increased PKA activity, CREB activation, and increased transcription of PCK1 and G6PC genes. Has capacity to bind repeated elements in single-stranded DNA such as the purine-rich single strand of the PUR element located upstream of the MYC gene. Participates in transcriptional and translational regulation of alpha-MHC expression in cardiac myocytes by binding to the purine-rich negative regulatory (PNR) element. Modulates constitutive liver galectin-3 gene transcription by binding to its promoter. May play a role in the dendritic transport of a subset of mRNAs. The chain is Transcriptional regulator protein Pur-beta (Purb) from Rattus norvegicus (Rat).